The following is a 309-amino-acid chain: Cytochrome c biogenesis protein CcsA (309 aa).

8 helical membrane-spanning segments follow: residues 18-38, 43-63, 67-87, 102-122, 148-168, 216-236, 250-267, and 279-299; these read LGLL…GAFF, FFIV…QLLF, ISGH…TWGI, IIPS…CFVL, VMLS…VLFI, SILI…VWAN, TWAF…HMRI, and LATT…FLGI.

The protein belongs to the CcmF/CycK/Ccl1/NrfE/CcsA family. May interact with ccs1.

It is found in the cellular thylakoid membrane. In terms of biological role, required during biogenesis of c-type cytochromes (cytochrome c6 and cytochrome f) at the step of heme attachment. This chain is Cytochrome c biogenesis protein CcsA, found in Prochlorococcus marinus (strain MIT 9215).